The following is a 589-amino-acid chain: Proline--tRNA ligase (589 aa).

This sequence belongs to the class-II aminoacyl-tRNA synthetase family. ProS type 1 subfamily. Homodimer.

The protein resides in the cytoplasm. It carries out the reaction tRNA(Pro) + L-proline + ATP = L-prolyl-tRNA(Pro) + AMP + diphosphate. Its function is as follows. Catalyzes the attachment of proline to tRNA(Pro) in a two-step reaction: proline is first activated by ATP to form Pro-AMP and then transferred to the acceptor end of tRNA(Pro). As ProRS can inadvertently accommodate and process non-cognate amino acids such as alanine and cysteine, to avoid such errors it has two additional distinct editing activities against alanine. One activity is designated as 'pretransfer' editing and involves the tRNA(Pro)-independent hydrolysis of activated Ala-AMP. The other activity is designated 'posttransfer' editing and involves deacylation of mischarged Ala-tRNA(Pro). The misacylated Cys-tRNA(Pro) is not edited by ProRS. The polypeptide is Proline--tRNA ligase (Gloeobacter violaceus (strain ATCC 29082 / PCC 7421)).